Reading from the N-terminus, the 250-residue chain is Sulfate transporter CysZ (250 aa).

4 consecutive transmembrane segments (helical) span residues 27 to 47 (FVVL…YYLF), 64 to 84 (FLSW…LATF), 150 to 170 (FLLL…WFLF), and 210 to 230 (MLVA…PVAV).

This sequence belongs to the CysZ family.

The protein localises to the cell inner membrane. Its function is as follows. High affinity, high specificity proton-dependent sulfate transporter, which mediates sulfate uptake. Provides the sulfur source for the cysteine synthesis pathway. The sequence is that of Sulfate transporter CysZ from Vibrio cholerae serotype O1 (strain ATCC 39541 / Classical Ogawa 395 / O395).